A 385-amino-acid polypeptide reads, in one-letter code: 1-deoxy-D-xylulose 5-phosphate reductoisomerase (385 aa).

Positions 10, 11, 12, 13, 36, 38, and 122 each coordinate NADPH. K123 provides a ligand contact to 1-deoxy-D-xylulose 5-phosphate. E124 is an NADPH binding site. D148 serves as a coordination point for Mn(2+). 1-deoxy-D-xylulose 5-phosphate contacts are provided by S149, E150, S174, and H197. E150 is a Mn(2+) binding site. G203 contributes to the NADPH binding site. 4 residues coordinate 1-deoxy-D-xylulose 5-phosphate: S210, N215, K216, and E219. E219 provides a ligand contact to Mn(2+).

The protein belongs to the DXR family. Requires Mg(2+) as cofactor. Mn(2+) is required as a cofactor.

It catalyses the reaction 2-C-methyl-D-erythritol 4-phosphate + NADP(+) = 1-deoxy-D-xylulose 5-phosphate + NADPH + H(+). It participates in isoprenoid biosynthesis; isopentenyl diphosphate biosynthesis via DXP pathway; isopentenyl diphosphate from 1-deoxy-D-xylulose 5-phosphate: step 1/6. Functionally, catalyzes the NADPH-dependent rearrangement and reduction of 1-deoxy-D-xylulose-5-phosphate (DXP) to 2-C-methyl-D-erythritol 4-phosphate (MEP). The chain is 1-deoxy-D-xylulose 5-phosphate reductoisomerase from Citrifermentans bemidjiense (strain ATCC BAA-1014 / DSM 16622 / JCM 12645 / Bem) (Geobacter bemidjiensis).